Reading from the N-terminus, the 501-residue chain is Aldehyde dehydrogenase 1A1 (501 aa).

Ser2 carries the post-translational modification N-acetylserine. Residues Lys91 and Lys128 each carry the N6-acetyllysine modification. NAD(+) contacts are provided by residues 167 to 170 (IPWN), 193 to 196 (KPAE), 226 to 227 (GP), and 246 to 247 (GS). Lys252 carries the post-translational modification N6-acetyllysine. The active-site Proton acceptor is the Glu269. Residue 269–271 (ELG) participates in NAD(+) binding. Cys303 serves as the catalytic Nucleophile. A mediates interaction with PRMT3 region spans residues 336–501 (LTPGVSQGPQ…VTIKISQKNS (166 aa)). Residue Thr337 is modified to Phosphothreonine. Residue 349 to 353 (EQYEK) participates in NAD(+) binding. N6-acetyllysine occurs at positions 353 and 367. 400–402 (EIF) is an NAD(+) binding site. Position 410 is an N6-acetyllysine (Lys410). Ser413 is subject to Phosphoserine. N6-acetyllysine occurs at positions 419 and 495.

It belongs to the aldehyde dehydrogenase family. In terms of assembly, homotetramer. Interacts with PRMT3; the interaction is direct, inhibits ALDH1A1 aldehyde dehydrogenase activity and is independent of the methyltransferase activity of PRMT3. The N-terminus is blocked most probably by acetylation.

The protein localises to the cytoplasm. The protein resides in the cytosol. It is found in the cell projection. It localises to the axon. The catalysed reaction is an aldehyde + NAD(+) + H2O = a carboxylate + NADH + 2 H(+). It carries out the reaction all-trans-retinal + NAD(+) + H2O = all-trans-retinoate + NADH + 2 H(+). It catalyses the reaction 9-cis-retinal + NAD(+) + H2O = 9-cis-retinoate + NADH + 2 H(+). The enzyme catalyses 11-cis-retinal + NAD(+) + H2O = 11-cis-retinoate + NADH + 2 H(+). The catalysed reaction is 13-cis-retinal + NAD(+) + H2O = 13-cis-retinoate + NADH + 2 H(+). It carries out the reaction 3-deoxyglucosone + NAD(+) + H2O = 2-dehydro-3-deoxy-D-gluconate + NADH + 2 H(+). It catalyses the reaction (E)-4-hydroxynon-2-enal + NAD(+) + H2O = (E)-4-hydroxynon-2-enoate + NADH + 2 H(+). The enzyme catalyses malonaldehyde + NAD(+) + H2O = 3-oxopropanoate + NADH + 2 H(+). The catalysed reaction is hexanal + NAD(+) + H2O = hexanoate + NADH + 2 H(+). It carries out the reaction propanal + NAD(+) + H2O = propanoate + NADH + 2 H(+). It catalyses the reaction acetaldehyde + NAD(+) + H2O = acetate + NADH + 2 H(+). The enzyme catalyses benzaldehyde + NAD(+) + H2O = benzoate + NADH + 2 H(+). The catalysed reaction is 4-aminobutanal + NAD(+) + H2O = 4-aminobutanoate + NADH + 2 H(+). It functions in the pathway cofactor metabolism; retinol metabolism. Inhibited by duocarmycin analogs. Cytosolic dehydrogenase that catalyzes the irreversible oxidation of a wide range of aldehydes to their corresponding carboxylic acid. Functions downstream of retinol dehydrogenases and catalyzes the oxidation of retinaldehyde into retinoic acid, the second step in the oxidation of retinol/vitamin A into retinoic acid. This pathway is crucial to control the levels of retinol and retinoic acid, two important molecules which excess can be teratogenic and cytotoxic. Also oxidizes aldehydes resulting from lipid peroxidation like (E)-4-hydroxynon-2-enal/HNE, malonaldehyde and hexanal that form protein adducts and are highly cytotoxic. By participating for instance to the clearance of (E)-4-hydroxynon-2-enal/HNE in the lens epithelium prevents the formation of HNE-protein adducts and lens opacification. Also functions downstream of fructosamine-3-kinase in the fructosamine degradation pathway by catalyzing the oxidation of 3-deoxyglucosone, the carbohydrate product of fructosamine 3-phosphate decomposition, which is itself a potent glycating agent that may react with lysine and arginine side-chains of proteins. Also has an aminobutyraldehyde dehydrogenase activity and is probably part of an alternative pathway for the biosynthesis of GABA/4-aminobutanoate in midbrain, thereby playing a role in GABAergic synaptic transmission. This chain is Aldehyde dehydrogenase 1A1, found in Ovis aries (Sheep).